The following is a 502-amino-acid chain: Mitochondrial fusion and transport protein UGO1 (502 aa).

The residue at position 1 (Met-1) is an N-acetylmethionine. Residues Met-1 to Ser-293 lie on the Cytoplasmic side of the membrane. Residues Met-1 to Phe-294 form a binds FZO1 region. The Solcar repeat unit spans residues Pro-288–Leu-383. Residues Phe-294–Ile-314 form a helical; Signal-anchor for type II membrane protein membrane-spanning segment. Residues Asp-312–Phe-502 are binds MGM1. Over Arg-315–Phe-502 the chain is Mitochondrial intermembrane.

In terms of assembly, interacts with FZO1 through its cytoplasmic domain and with MGM1 through its mitochondrial intermembrane space domain.

It is found in the mitochondrion outer membrane. In terms of biological role, required for mitochondrial fusion as well as normal mitochondrial morphology by bridging the essential interaction between FZO1 and MGM1. May coordinate fusion of inner and outer membranes during mitochondrial fusion. The polypeptide is Mitochondrial fusion and transport protein UGO1 (Saccharomyces cerevisiae (strain ATCC 204508 / S288c) (Baker's yeast)).